The sequence spans 348 residues: Fructose-1,6-bisphosphatase (348 aa).

The Pro/N-degron motif lies at Pro2–Val5. Ser12 bears the Phosphoserine mark. Residues Ile27 to Gln31 and Thr38 to Thr42 contribute to the AMP site. The Mg(2+) site is built by Asp79 and Glu108. Ser122–Tyr123 contributes to the AMP binding site. Mg(2+) is bound by residues Asp128, Ile130, and Asp131. Asp131–Ser134 contacts substrate. An AMP-binding site is contributed by Arg150. Substrate is bound by residues Asn222 to Asn225, Arg255 to Met260, Tyr276, and Lys286 to Arg288. Glu292 contributes to the Mg(2+) binding site.

Belongs to the FBPase class 1 family. As to quaternary structure, homotetramer. It depends on Mg(2+) as a cofactor. Ubiquitinated. Targeted for proteasomal degradation when cells are shifted to glucose-containing growth medium.

It carries out the reaction beta-D-fructose 1,6-bisphosphate + H2O = beta-D-fructose 6-phosphate + phosphate. Its pathway is carbohydrate biosynthesis; gluconeogenesis. With respect to regulation, subject to complex allosteric regulation. The enzyme can assume an active R-state, or an inactive T-state. Intermediate conformations may exist. AMP acts as allosteric inhibitor. AMP binding affects the turnover of bound substrate and not the affinity for substrate. The sequence is that of Fructose-1,6-bisphosphatase (FBP1) from Saccharomyces cerevisiae (strain ATCC 204508 / S288c) (Baker's yeast).